The chain runs to 145 residues: Globin-1 (145 aa).

Residues 1-145 (GISADQAKAL…VIVPGMKAGY (145 aa)) form the Globin domain. His-63 and His-92 together coordinate heme b.

Belongs to the globin family. Monomer.

The sequence is that of Globin-1 from Liolophura japonica (Chiton).